A 250-amino-acid chain; its full sequence is MAEAGASKGGEEPGRLPEHEEEEESPLWHGAGHCKWFNVRMGFGFISMSSREGSPLESPVDVFVHQSKLYMEGFRSLKEGEPVEFTYKKSSKGLESIRVTGPGGSPCLGSERRPKGKTVQKRKPKGDRCYNCGGLDHHAKECSLPPQPKKCHYCQSIMHMVANCPHKTVSQQPTSSQGRHEAEPQPSTSAFLREGGGTYGYSSPSYSQEGRSEISERSGRSPQEASSSKLSASPEEPSRKGPSVQKRKKT.

2 disordered regions span residues 1–27 (MAEA…ESPL) and 98–126 (RVTG…KPKG). A compositionally biased stretch (basic and acidic residues) spans 9–18 (GGEEPGRLPE). Residues 29–102 (HGAGHCKWFN…GLESIRVTGP (74 aa)) form the CSD domain. Basic residues predominate over residues 114–125 (PKGKTVQKRKPK). 2 consecutive CCHC-type zinc fingers follow at residues 127–144 (DRCY…ECSL) and 149–166 (KKCH…NCPH). 8 residues coordinate Zn(2+): C129, C132, H137, C142, C151, C154, H159, and C164. Positions 165 to 250 (PHKTVSQQPT…GPSVQKRKKT (86 aa)) are disordered. Residues 168 to 177 (TVSQQPTSSQ) are compositionally biased toward polar residues. The span at 200–209 (GYSSPSYSQE) shows a compositional bias: low complexity. The span at 210–219 (GRSEISERSG) shows a compositional bias: basic and acidic residues.

The protein belongs to the lin-28 family.

The protein localises to the nucleus. The protein resides in the nucleolus. In terms of biological role, suppressor of specific microRNA (miRNA) biogenesis. Binds target primary miRNA transcripts and sequester them in the nucleolus, away from the microprocessor complex, hence preventing their processing into mature miRNA. The specific interaction with target pri-miRNAs occurs via an 5'-GGAG-3' motif in the pre-miRNA terminal loop. The chain is Protein lin-28 homolog B (LIN28B) from Gallus gallus (Chicken).